Here is a 340-residue protein sequence, read N- to C-terminus: Phosphoribosylformylglycinamidine cyclo-ligase (340 aa).

Belongs to the AIR synthase family.

The protein localises to the cytoplasm. It catalyses the reaction 2-formamido-N(1)-(5-O-phospho-beta-D-ribosyl)acetamidine + ATP = 5-amino-1-(5-phospho-beta-D-ribosyl)imidazole + ADP + phosphate + H(+). It participates in purine metabolism; IMP biosynthesis via de novo pathway; 5-amino-1-(5-phospho-D-ribosyl)imidazole from N(2)-formyl-N(1)-(5-phospho-D-ribosyl)glycinamide: step 2/2. This Streptococcus pneumoniae (strain P1031) protein is Phosphoribosylformylglycinamidine cyclo-ligase.